Reading from the N-terminus, the 403-residue chain is Anti-sigma-I factor RsgI8 (403 aa).

Residues 1–59 (MTKQKGTILKLKNNLAIIMTSDCKIVSIKRQPGMYEGLEISFNKNEIINKKNKLAFYSR) lie on the Cytoplasmic side of the membrane. In terms of domain architecture, RsgI N-terminal anti-sigma spans 4-51 (QKGTILKLKNNLAIIMTSDCKIVSIKRQPGMYEGLEISFNKNEIINKK). A helical transmembrane segment spans residues 60–80 (IAAGIAAIFIIMVISFNLFNN). Residues 81–403 (NDVYAYVAID…KAKNSIEKMP (323 aa)) lie on the Extracellular side of the membrane. 3 stretches are compositionally biased toward basic and acidic residues: residues 254–314 (VHNV…EPAK), 324–335 (LPKDKTIPEEKT), and 349–403 (VEPK…EKMP). Residues 254–403 (VHNVKKEEPK…KAKNSIEKMP (150 aa)) are disordered.

Interacts (via RsgI N-terminal anti-sigma domain) with SigI8.

It is found in the cell membrane. Its function is as follows. Anti-sigma factor for SigI8. Negatively regulates SigI8 activity through direct interaction. The polypeptide is Anti-sigma-I factor RsgI8 (Acetivibrio thermocellus (strain ATCC 27405 / DSM 1237 / JCM 9322 / NBRC 103400 / NCIMB 10682 / NRRL B-4536 / VPI 7372) (Clostridium thermocellum)).